A 609-amino-acid polypeptide reads, in one-letter code: Glutamine--fructose-6-phosphate aminotransferase [isomerizing] (609 aa).

The active-site Nucleophile; for GATase activity is Cys2. Positions 2-218 constitute a Glutamine amidotransferase type-2 domain; it reads CGIVGAIAQR…EGDIAEITRR (217 aa). 2 SIS domains span residues 286 to 426 and 458 to 599; these read ADEL…LKGL and LAED…VDQP. Catalysis depends on Lys604, which acts as the For Fru-6P isomerization activity.

In terms of assembly, homodimer.

It is found in the cytoplasm. The enzyme catalyses D-fructose 6-phosphate + L-glutamine = D-glucosamine 6-phosphate + L-glutamate. Functionally, catalyzes the first step in hexosamine metabolism, converting fructose-6P into glucosamine-6P using glutamine as a nitrogen source. This chain is Glutamine--fructose-6-phosphate aminotransferase [isomerizing], found in Escherichia coli O157:H7.